We begin with the raw amino-acid sequence, 441 residues long: Cysteine desulfurase, mitosomal (441 aa).

Residues 107–108 (AT), asparagine 189, glutamine 217, and 237–239 (SGH) each bind pyridoxal 5'-phosphate. An N6-(pyridoxal phosphate)lysine modification is found at lysine 240. Threonine 277 serves as a coordination point for pyridoxal 5'-phosphate. Cysteine 367 functions as the Cysteine persulfide intermediate in the catalytic mechanism. Position 367 (cysteine 367) interacts with [2Fe-2S] cluster.

The protein belongs to the class-V pyridoxal-phosphate-dependent aminotransferase family. NifS/IscS subfamily. As to quaternary structure, interacts with ISD11. The cofactor is pyridoxal 5'-phosphate.

The protein resides in the mitosome. The enzyme catalyses (sulfur carrier)-H + L-cysteine = (sulfur carrier)-SH + L-alanine. In terms of biological role, catalyzes the removal of elemental sulfur from cysteine to produce alanine. It supplies the inorganic sulfur for iron-sulfur (Fe-S) clusters in mitosomes. This is Cysteine desulfurase, mitosomal from Trachipleistophora hominis (Microsporidian parasite).